The chain runs to 260 residues: tRNA pseudouridine synthase A (260 aa).

Asp-51 acts as the Nucleophile in catalysis. Tyr-109 is a substrate binding site.

The protein belongs to the tRNA pseudouridine synthase TruA family. In terms of assembly, homodimer.

It catalyses the reaction uridine(38/39/40) in tRNA = pseudouridine(38/39/40) in tRNA. Functionally, formation of pseudouridine at positions 38, 39 and 40 in the anticodon stem and loop of transfer RNAs. The sequence is that of tRNA pseudouridine synthase A from Methylibium petroleiphilum (strain ATCC BAA-1232 / LMG 22953 / PM1).